Reading from the N-terminus, the 448-residue chain is 26S proteasome regulatory subunit 4 homolog (448 aa).

A compositionally biased stretch (polar residues) spans 1–10; it reads MGQAQSGNFS. Positions 1 to 58 are disordered; that stretch reads MGQAQSGNFSNFGDGANGDNKKDQKKDKPKYEPPVPTRTGRRKKKAQSGPDASAKLPT. A compositionally biased stretch (basic and acidic residues) spans 19-31; it reads DNKKDQKKDKPKY. 232-239 contributes to the ATP binding site; sequence GAPGTGKT.

This sequence belongs to the AAA ATPase family.

The protein localises to the cytoplasm. It is found in the nucleus. The 26S proteasome is involved in the ATP-dependent degradation of ubiquitinated proteins. The regulatory (or ATPase) complex confers ATP dependency and substrate specificity to the 26S complex. The sequence is that of 26S proteasome regulatory subunit 4 homolog (mts2) from Schizosaccharomyces pombe (strain 972 / ATCC 24843) (Fission yeast).